The sequence spans 399 residues: S-adenosylmethionine synthase (399 aa).

ATP is bound at residue H15. Position 17 (D17) interacts with Mg(2+). E43 lines the K(+) pocket. L-methionine-binding residues include E56 and Q99. The interval 99-109 (QSPDIAGGVDH) is flexible loop. ATP-binding positions include 175–177 (DAK), 242–243 (RF), D251, 257–258 (RK), A274, and K278. D251 contacts L-methionine. Residue K282 coordinates L-methionine.

The protein belongs to the AdoMet synthase family. Homotetramer; dimer of dimers. Requires Mg(2+) as cofactor. The cofactor is K(+).

The protein localises to the cytoplasm. It catalyses the reaction L-methionine + ATP + H2O = S-adenosyl-L-methionine + phosphate + diphosphate. Its pathway is amino-acid biosynthesis; S-adenosyl-L-methionine biosynthesis; S-adenosyl-L-methionine from L-methionine: step 1/1. Its function is as follows. Catalyzes the formation of S-adenosylmethionine (AdoMet) from methionine and ATP. The overall synthetic reaction is composed of two sequential steps, AdoMet formation and the subsequent tripolyphosphate hydrolysis which occurs prior to release of AdoMet from the enzyme. This is S-adenosylmethionine synthase from Lactobacillus helveticus (strain DPC 4571).